The following is a 657-amino-acid chain: Threonine--tRNA ligase (657 aa).

The region spanning 1-61 (MINVTLPDGS…EGDASVAIIT (61 aa)) is the TGS domain. The interval 244-549 (DHRKLGAQLD…LIENYAGSFP (306 aa)) is catalytic. C349, H400, and H526 together coordinate Zn(2+).

Belongs to the class-II aminoacyl-tRNA synthetase family. Homodimer. Requires Zn(2+) as cofactor.

Its subcellular location is the cytoplasm. The enzyme catalyses tRNA(Thr) + L-threonine + ATP = L-threonyl-tRNA(Thr) + AMP + diphosphate + H(+). Catalyzes the attachment of threonine to tRNA(Thr) in a two-step reaction: L-threonine is first activated by ATP to form Thr-AMP and then transferred to the acceptor end of tRNA(Thr). Also edits incorrectly charged L-seryl-tRNA(Thr). The chain is Threonine--tRNA ligase from Hyphomonas neptunium (strain ATCC 15444).